The following is a 593-amino-acid chain: MSTEAEPRVLREVVLSQLATGESRAYKMWLPPLTDPTPVNELVERDYQRRPLRFGLGIMDEPRRHRQEVWGVDVSAAGGNIAVGGAPQTGKSTFLQTLVVSAAATHTPRQVQFYCVDLGGGGLMYLEDLPHVGGVATRAEPDRVNRVVAEVKAVLRAREQVFKQYRVGSIASYREMRDDPSNPASQDPFGDVFLVIDGWPAFVAEFPDLEPAVQDIAGQGLAYGVHVIITTPRWTELKSRVRDYLGTKIEFRLGDVNETQIDRITREIPANRPGRAVSLEKHHLMMGVPRLDGVHSADNIVEAISSAVQQIAGRHTDQAPQVRVLPERIYLHQLDPNPPGPDSDYRTRWQVPLGVRESDLTVAYNQMHLTPHLLIFGAPKSGKTRIAHAVAQAICKRNSPQQVRFMLADYRSGLLDAVPQSHLLDAGAINRNSATLEEAIKALAVNLKKRLPPPDLTTAQLRARSWWSGPDVVLLVDDWHMVTAAAGMVSPMAPLGPLLPAAADIGLHVIVTCQMSMAHRATMDKFVGAAYGAGSPTLFLSGEKNDFPSRDIIVKKRPPGQAFLVGPDGKEVIQAAYVDPPEEEVFSPPSEGS.

FtsK domains follow at residues 66–260 (RQEV…NETQ) and 350–546 (QVPL…EKND). ATP is bound by residues 85 to 92 (GAPQTGKS) and 377 to 384 (GAPKSGKT).

In terms of assembly, part of the ESX-1 / type VII secretion system (T7SS), which is composed of cytosolic and membrane components. The ESX-1 membrane complex is composed of EccB1, EccCa1, EccCb1, EccD1 and EccE1.

The protein localises to the cytoplasm. In terms of biological role, part of the ESX-1 / type VII specialized secretion system (T7SS), which exports several proteins including EsxA and EsxB. Plays a role in DNA conjugation, in both donor and recipient strains. The polypeptide is ESX-1 secretion system protein EccCb1 (eccCb1) (Mycolicibacterium smegmatis (strain MKD8) (Mycobacterium smegmatis)).